The primary structure comprises 387 residues: MFEFSDRLKVLPPYLFAELDRKKQEKIEQGVDVIDLGVGDPDMPTPKPIVEAAKKALENPENHKYPSYVGKYEFRKAVADWYKRRFDVDLDPNTEVITLIGSKEGIAHFPLAFVNPGDIVLCPDPAYPVYRIGAIFAGGTPYTVPLKEENNFLPDLDSIPEDVAKKAKIIWINYPNNPTSAPPTLEFYKKLVDWAKEYNVIIASDNAYSEIYTGQEKPPSILQVPGAKDVAIEFHSLSKTYNMTGWRIGMAVGNKELVAGLGKVKTNVDSGQFGAVQDAGIVALNLPEEEVEKIRDVYRERKKIMTEALEKIGLEIYRSDYTFYLWIKVPEGYTSAEFVGRLIDEAGIVCTPGNGFGEYGEGYFRISLTVPTERLLEAAERIKNLKL.

Residues Tyr-14 and Gly-39 each coordinate substrate. Residues Tyr-68, 102–103 (SK), Tyr-127, Asn-177, Tyr-208, and 236–238 (SLS) each bind pyridoxal 5'-phosphate. Lys-103, Tyr-127, and Asn-177 together coordinate substrate. N6-(pyridoxal phosphate)lysine is present on Lys-239. Position 247 (Arg-247) interacts with pyridoxal 5'-phosphate. Arg-365 contacts substrate.

The protein belongs to the class-I pyridoxal-phosphate-dependent aminotransferase family. LL-diaminopimelate aminotransferase subfamily. In terms of assembly, homodimer. Pyridoxal 5'-phosphate serves as cofactor.

It catalyses the reaction (2S,6S)-2,6-diaminopimelate + 2-oxoglutarate = (S)-2,3,4,5-tetrahydrodipicolinate + L-glutamate + H2O + H(+). It functions in the pathway amino-acid biosynthesis; L-lysine biosynthesis via DAP pathway; LL-2,6-diaminopimelate from (S)-tetrahydrodipicolinate (aminotransferase route): step 1/1. Functionally, involved in the synthesis of meso-diaminopimelate (m-DAP or DL-DAP), required for both lysine and peptidoglycan biosynthesis. Catalyzes the direct conversion of tetrahydrodipicolinate to LL-diaminopimelate. This chain is LL-diaminopimelate aminotransferase, found in Aquifex aeolicus (strain VF5).